The primary structure comprises 395 residues: tRNA (guanine-N(7)-)-methyltransferase (395 aa).

S-adenosyl-L-methionine-binding residues include E126, E151, and D178. 2 residues coordinate substrate: K204 and D234.

Belongs to the class I-like SAM-binding methyltransferase superfamily. TrmB family.

It catalyses the reaction guanosine(46) in tRNA + S-adenosyl-L-methionine = N(7)-methylguanosine(46) in tRNA + S-adenosyl-L-homocysteine. It participates in tRNA modification; N(7)-methylguanine-tRNA biosynthesis. In terms of biological role, catalyzes the formation of N(7)-methylguanine at position 46 (m7G46) in tRNA. This chain is tRNA (guanine-N(7)-)-methyltransferase, found in Campylobacter fetus subsp. fetus (strain 82-40).